The chain runs to 348 residues: Inositol 2-dehydrogenase/D-chiro-inositol 3-dehydrogenase (348 aa).

Belongs to the Gfo/Idh/MocA family. As to quaternary structure, homotetramer.

It carries out the reaction myo-inositol + NAD(+) = scyllo-inosose + NADH + H(+). The enzyme catalyses 1D-chiro-inositol + NAD(+) = scyllo-inosine + NADH + H(+). The protein operates within polyol metabolism; myo-inositol degradation into acetyl-CoA; acetyl-CoA from myo-inositol: step 1/7. Functionally, involved in the oxidation of myo-inositol (MI) and D-chiro-inositol (DCI) to 2-keto-myo-inositol (2KMI or 2-inosose) and 1-keto-D-chiro-inositol (1KDCI), respectively. In Halalkalibacterium halodurans (strain ATCC BAA-125 / DSM 18197 / FERM 7344 / JCM 9153 / C-125) (Bacillus halodurans), this protein is Inositol 2-dehydrogenase/D-chiro-inositol 3-dehydrogenase.